Consider the following 582-residue polypeptide: Peptidyl-prolyl cis-trans isomerase FKBP10 (582 aa).

The first 26 residues, 1–26 (MFPAGPPSHSLLRLPLLQLLLLVVQA), serve as a signal peptide directing secretion. PPIase FKBP-type domains are found at residues 62–150 (GDFV…LDVW), 174–262 (GDFV…IDVH), and 286–374 (GDFM…IDFH). Asn70, Asn182, Asn294, Asn310, Asn352, Asn393, and Asn407 each carry an N-linked (GlcNAc...) asparagine glycan. Positions 399–486 (GDFVRYHYNC…LFEVELVSRE (88 aa)) constitute a PPIase FKBP-type 4 domain. EF-hand domains are found at residues 497–532 (WHKDPPANLFEDMDLNKDGEVPPEEFSTFIKAQVSE) and 542–577 (DPEKTIGDMFQNQDRNQDGKITVDELKLKSDEDEER). Ca(2+) is bound by residues Asp510, Asn512, Asp514, Glu516, Glu521, Asp555, Asn557, Asp559, Lys561, and Glu566. The tract at residues 533–582 (GKGRLMPGQDPEKTIGDMFQNQDRNQDGKITVDELKLKSDEDEERVHEEL) is disordered. Over residues 556–582 (RNQDGKITVDELKLKSDEDEERVHEEL) the composition is skewed to basic and acidic residues. The short motif at 579–582 (HEEL) is the Prevents secretion from ER element.

In terms of processing, glycosylated and phosphorylated.

It is found in the endoplasmic reticulum lumen. It catalyses the reaction [protein]-peptidylproline (omega=180) = [protein]-peptidylproline (omega=0). Its activity is regulated as follows. Inhibited by both FK506 and rapamycin, but not by cyclosporin A. PPIases accelerate the folding of proteins during protein synthesis. This is Peptidyl-prolyl cis-trans isomerase FKBP10 (FKBP10) from Homo sapiens (Human).